We begin with the raw amino-acid sequence, 587 residues long: Aspartate--tRNA ligase (587 aa).

Glu-175 is a binding site for L-aspartate. The aspartate stretch occupies residues Gln-199–Lys-202. Arg-221 and His-446 together coordinate L-aspartate. ATP is bound at residue Arg-221 to Glu-223. Residue Glu-480 participates in ATP binding. Arg-487 provides a ligand contact to L-aspartate. Gly-532–Arg-535 lines the ATP pocket.

Belongs to the class-II aminoacyl-tRNA synthetase family. Type 1 subfamily. In terms of assembly, homodimer.

The protein resides in the cytoplasm. The enzyme catalyses tRNA(Asp) + L-aspartate + ATP = L-aspartyl-tRNA(Asp) + AMP + diphosphate. Its function is as follows. Catalyzes the attachment of L-aspartate to tRNA(Asp) in a two-step reaction: L-aspartate is first activated by ATP to form Asp-AMP and then transferred to the acceptor end of tRNA(Asp). In Streptomyces coelicolor (strain ATCC BAA-471 / A3(2) / M145), this protein is Aspartate--tRNA ligase.